The following is a 172-amino-acid chain: S-ribosylhomocysteine lyase (172 aa).

Fe cation-binding residues include H54, H58, and C128.

It belongs to the LuxS family. As to quaternary structure, homodimer. Requires Fe cation as cofactor.

The enzyme catalyses S-(5-deoxy-D-ribos-5-yl)-L-homocysteine = (S)-4,5-dihydroxypentane-2,3-dione + L-homocysteine. Functionally, involved in the synthesis of autoinducer 2 (AI-2) which is secreted by bacteria and is used to communicate both the cell density and the metabolic potential of the environment. The regulation of gene expression in response to changes in cell density is called quorum sensing. Catalyzes the transformation of S-ribosylhomocysteine (RHC) to homocysteine (HC) and 4,5-dihydroxy-2,3-pentadione (DPD). The protein is S-ribosylhomocysteine lyase of Vibrio vulnificus (strain CMCP6).